A 461-amino-acid polypeptide reads, in one-letter code: Cysteine--tRNA ligase (461 aa).

Residue cysteine 28 participates in Zn(2+) binding. The short motif at 30-40 is the 'HIGH' region element; the sequence is ITVYDLCHIGH. Positions 209, 234, and 238 each coordinate Zn(2+). The 'KMSKS' region signature appears at 266-270; sequence KMSKS. Lysine 269 is an ATP binding site.

Belongs to the class-I aminoacyl-tRNA synthetase family. In terms of assembly, monomer. It depends on Zn(2+) as a cofactor.

It localises to the cytoplasm. The enzyme catalyses tRNA(Cys) + L-cysteine + ATP = L-cysteinyl-tRNA(Cys) + AMP + diphosphate. The sequence is that of Cysteine--tRNA ligase from Cronobacter sakazakii (strain ATCC BAA-894) (Enterobacter sakazakii).